A 509-amino-acid chain; its full sequence is MDPPRASHLSPRKKRPRQTGALMASSPQDIKFQDLVVFILEKKMGTTRRAFLMELARRKGFRVENELSDSVTHIVAENNSGSDVLEWLQAQKVQVSSQPELLDVSWLIECIRAGKPVEMTGKHQLVVRRDYSDSTNPGPPKTPPIAVQKISQYACQRRTTLNNCNQIFTDAFDILAENCEFRENEDSCVTFMRAASVLKSLPFTIISMKDTEGIPCLGSKVKGIIEEIIEDGESSEVKAVLNDERYQSFKLFTSVFGVGLKTSEKWFRMGFRTLSKVRSDKSLKFTRMQKAGFLYYEDLVSCVTRAEAEAVSVLVKEAVWAFLPDAFVTMTGGFRRGKKMGHDVDFLITSPGSTEDEEQLLQKVMNLWEKKGLLLYYDLVESTFEKLRLPSRKVDALDHFQKCFLIFKLPRQRVDSDQSSWQEGKTWKAIRVDLVLCPYERRAFALLGWTGSRQFERDLRRYATHERKMILDNHALYDKTKRIFLKAESEEEIFAHLGLDYIEPWERNA.

Residues 1–24 (MDPPRASHLSPRKKRPRQTGALMA) are disordered. Positions 11 to 17 (PRKKRPR) match the Nuclear localization signal motif. Positions 27–124 (PQDIKFQDLV…KPVEMTGKHQ (98 aa)) constitute a BRCT domain. Ser-134 is modified (phosphoserine). Residues 151–509 (SQYACQRRTT…DYIEPWERNA (359 aa)) are mediates interaction with DNTTIP2. An involved in DNA binding region spans residues 258-262 (VGLKT). Residues 333–338 (GFRRGK) and 342–345 (HDVD) each bind a 2'-deoxyribonucleoside 5'-triphosphate. 3 residues coordinate Mg(2+): Asp-343, Asp-345, and Asp-433. Position 448-449 (448-449 (GW)) interacts with a 2'-deoxyribonucleoside 5'-triphosphate.

This sequence belongs to the DNA polymerase type-X family. As to quaternary structure, interacts with PRP19 and DNTTIP1. Forms a ternary complex with DNTTIP2 and core histone. Released from this complex by PCNA. Interacts with TRERF1. Mg(2+) serves as cofactor.

It is found in the nucleus. It carries out the reaction DNA(n) + a 2'-deoxyribonucleoside 5'-triphosphate = DNA(n+1) + diphosphate. Its function is as follows. Template-independent DNA polymerase which catalyzes the random addition of deoxynucleoside 5'-triphosphate to the 3'-end of a DNA initiator. One of the in vivo functions of this enzyme is the addition of nucleotides at the junction (N region) of rearranged Ig heavy chain and T-cell receptor gene segments during the maturation of B- and T-cells. The sequence is that of DNA nucleotidylexotransferase (DNTT) from Homo sapiens (Human).